A 1001-amino-acid polypeptide reads, in one-letter code: DNA topoisomerase 3-alpha (1001 aa).

The region spanning 35-179 (KVLCVAEKND…NLQVLRARFS (145 aa)) is the Toprim domain. In terms of domain architecture, Topo IA-type catalytic spans 197 to 617 (DQRVSDAVDV…QQVQKYKQVF (421 aa)). Tyrosine 362 functions as the O-(5'-phospho-DNA)-tyrosine intermediate in the catalytic mechanism. Positions 400-424 (GGPTPRNGNKSDQAHPPIHPTKYTN) are disordered. The C4-type zinc-finger motif lies at 658-685 (CPQCNKDMVLKTKKNGGFYLSCMGFPEC). The span at 774 to 792 (RMDNSQHPQPADSRQTGSS) shows a compositional bias: polar residues. Residues 774–810 (RMDNSQHPQPADSRQTGSSKALAQTLPPPTAAGESNS) are disordered. Zn(2+) contacts are provided by cysteine 813, cysteine 815, cysteine 838, cysteine 843, cysteine 897, cysteine 899, cysteine 922, and cysteine 930. 2 consecutive GRF-type zinc fingers follow at residues 813 to 852 (CNCGQEAVLLTVRKEGPNRGRQFFKCNGGSCNFFLWADSP) and 897 to 939 (CLCS…VDEN). The disordered stretch occupies residues 937 to 1001 (DENTAPGTSG…HTRPFCPQNR (65 aa)). Basic and acidic residues predominate over residues 953-964 (DRGRTLESEARS).

The protein belongs to the type IA topoisomerase family. In terms of assembly, binds ssDNA. Interacts (via N-terminal region) with BLM; the interaction is direct. Directly interacts with RMI1. Component of the RMI complex, containing at least TOP3A, RMI1 and RMI2. The RMI complex interacts with BLM. Requires Mg(2+) as cofactor. High expression is found in testis, heart, skeletal muscle and pancreas.

It localises to the mitochondrion matrix. It carries out the reaction ATP-independent breakage of single-stranded DNA, followed by passage and rejoining.. Functionally, releases the supercoiling and torsional tension of DNA introduced during the DNA replication and transcription by transiently cleaving and rejoining one strand of the DNA duplex. Introduces a single-strand break via transesterification at a target site in duplex DNA. The scissile phosphodiester is attacked by the catalytic tyrosine of the enzyme, resulting in the formation of a DNA-(5'-phosphotyrosyl)-enzyme intermediate and the expulsion of a 3'-OH DNA strand. The free DNA strand then undergoes passage around the unbroken strand thus removing DNA supercoils. Finally, in the religation step, the DNA 3'-OH attacks the covalent intermediate to expel the active-site tyrosine and restore the DNA phosphodiester backbone. As an essential component of the RMI complex it is involved in chromosome separation and the processing of homologous recombination intermediates to limit DNA crossover formation in cells. Has DNA decatenation activity. It is required for mtDNA decatenation and segregation after completion of replication, in a process that does not require BLM, RMI1 and RMI2. The polypeptide is DNA topoisomerase 3-alpha (TOP3A) (Homo sapiens (Human)).